The following is a 187-amino-acid chain: Elongation factor P (187 aa).

Lysine 34 carries the N6-(3,6-diaminohexanoyl)-5-hydroxylysine modification.

This sequence belongs to the elongation factor P family. In terms of processing, may be beta-lysylated on the epsilon-amino group of Lys-34 by the combined action of EpmA and EpmB, and then hydroxylated on the C5 position of the same residue by EpmC (if this protein is present). Lysylation is critical for the stimulatory effect of EF-P on peptide-bond formation. The lysylation moiety may extend toward the peptidyltransferase center and stabilize the terminal 3-CCA end of the tRNA. Hydroxylation of the C5 position on Lys-34 may allow additional potential stabilizing hydrogen-bond interactions with the P-tRNA.

It localises to the cytoplasm. The protein operates within protein biosynthesis; polypeptide chain elongation. Involved in peptide bond synthesis. Alleviates ribosome stalling that occurs when 3 or more consecutive Pro residues or the sequence PPG is present in a protein, possibly by augmenting the peptidyl transferase activity of the ribosome. Modification of Lys-34 is required for alleviation. This is Elongation factor P from Buchnera aphidicola subsp. Schizaphis graminum (strain Sg).